Here is a 279-residue protein sequence, read N- to C-terminus: Thioredoxin-like 1-1, chloroplastic (279 aa).

Residues 56–202 enclose the Thioredoxin domain; that stretch reads ALTERKARPL…FKDALAKHGP (147 aa). Catalysis depends on nucleophile residues C125 and C128. Residues C125 and C128 are joined by a disulfide bond.

This sequence belongs to the thioredoxin family.

In terms of biological role, probable thiol-disulfide oxidoreductase that may participate in various redox reactions. This chain is Thioredoxin-like 1-1, chloroplastic, found in Oryza sativa subsp. japonica (Rice).